The following is a 452-amino-acid chain: Bifunctional protein GlmU (452 aa).

The segment at 1–230 (MSRSRSAIIL…ADEVLGVNSR (230 aa)) is pyrophosphorylase. UDP-N-acetyl-alpha-D-glucosamine contacts are provided by residues 10–13 (LAAG), Lys-24, Gln-75, and 80–81 (GT). Mg(2+) is bound at residue Asp-105. Gly-141, Glu-156, Asn-171, and Asn-228 together coordinate UDP-N-acetyl-alpha-D-glucosamine. Mg(2+) is bound at residue Asn-228. A linker region spans residues 231–251 (ADLAEAEAAFQSRMRQSMMAD). The tract at residues 252-452 (GVTLIAPETV…ARKARKDSQT (201 aa)) is N-acetyltransferase. Positions 317 and 335 each coordinate UDP-N-acetyl-alpha-D-glucosamine. His-347 functions as the Proton acceptor in the catalytic mechanism. The UDP-N-acetyl-alpha-D-glucosamine site is built by Tyr-350 and Asn-361. Acetyl-CoA-binding positions include Ala-364, 370–371 (NY), Ser-389, Thr-407, and Arg-424.

This sequence in the N-terminal section; belongs to the N-acetylglucosamine-1-phosphate uridyltransferase family. In the C-terminal section; belongs to the transferase hexapeptide repeat family. As to quaternary structure, homotrimer. Mg(2+) serves as cofactor.

The protein localises to the cytoplasm. The enzyme catalyses alpha-D-glucosamine 1-phosphate + acetyl-CoA = N-acetyl-alpha-D-glucosamine 1-phosphate + CoA + H(+). The catalysed reaction is N-acetyl-alpha-D-glucosamine 1-phosphate + UTP + H(+) = UDP-N-acetyl-alpha-D-glucosamine + diphosphate. The protein operates within nucleotide-sugar biosynthesis; UDP-N-acetyl-alpha-D-glucosamine biosynthesis; N-acetyl-alpha-D-glucosamine 1-phosphate from alpha-D-glucosamine 6-phosphate (route II): step 2/2. It participates in nucleotide-sugar biosynthesis; UDP-N-acetyl-alpha-D-glucosamine biosynthesis; UDP-N-acetyl-alpha-D-glucosamine from N-acetyl-alpha-D-glucosamine 1-phosphate: step 1/1. It functions in the pathway bacterial outer membrane biogenesis; LPS lipid A biosynthesis. Catalyzes the last two sequential reactions in the de novo biosynthetic pathway for UDP-N-acetylglucosamine (UDP-GlcNAc). The C-terminal domain catalyzes the transfer of acetyl group from acetyl coenzyme A to glucosamine-1-phosphate (GlcN-1-P) to produce N-acetylglucosamine-1-phosphate (GlcNAc-1-P), which is converted into UDP-GlcNAc by the transfer of uridine 5-monophosphate (from uridine 5-triphosphate), a reaction catalyzed by the N-terminal domain. The protein is Bifunctional protein GlmU of Maricaulis maris (strain MCS10) (Caulobacter maris).